The primary structure comprises 1249 residues: Calmodulin-regulated spectrin-associated protein 3 (1249 aa).

Disordered regions lie at residues 183 to 205 (KTEQ…APAQ), 328 to 385 (PDGH…SMSH), 430 to 457 (VSSD…GDLP), 473 to 609 (LLPD…RLEE), 632 to 696 (LGKS…HEGL), 714 to 1029 (QRDM…SALA), and 1061 to 1111 (NNLG…TGPR). At Thr184 the chain carries Phosphothreonine. Low complexity predominate over residues 189–205 (AQRASPAAPADGAAPAQ). Ser193 is modified (phosphoserine). Residues 203-312 (PAQPSIRYRK…LVVMLAELFM (110 aa)) form the Calponin-homology (CH) domain. Phosphoserine is present on residues Ser334, Ser341, Ser347, Ser351, Ser368, Ser373, and Ser382. Over residues 341 to 352 (SPPQNNSGSSSP) the composition is skewed to low complexity. Over residues 364–383 (GGPQSPLRGSTGSLKSSPSM) the composition is skewed to polar residues. Over residues 437 to 454 (PPRPAPARTPTQPPPEPG) the composition is skewed to pro residues. 3 positions are modified to phosphoserine: Ser547, Ser554, and Ser560. A compositionally biased stretch (basic and acidic residues) spans 568–579 (AERKKQLVKAEA). Residues 594-604 (EALSSEMSELS) are compositionally biased toward low complexity. The stretch at 594–628 (EALSSEMSELSARLEEKRRAIEAQKRRIEAIFAKH) forms a coiled coil. Positions 647–657 (GEAEAEAEEAD) are enriched in acidic residues. Residue Ser685 is modified to Phosphoserine. A coiled-coil region spans residues 696 to 729 (LGEYNRAVSKLSAALSSLQRDMQRLTDQQQRLLA). Residues 731 to 741 (PEAPGSAPPPA) show a composition bias toward pro residues. The segment covering 754 to 779 (AASPSPARRVPATRRSPGPGPSQSPR) has biased composition (low complexity). At Ser769 the chain carries Phosphoserine. Phosphothreonine is present on Thr799. Ser814 is modified (phosphoserine). Residues 814–825 (SPSQVPVQTRSS) are compositionally biased toward polar residues. Over residues 889–940 (YKDEDKPEDEMAQKRASLLERQQRRAEEARRRKQWQEVEKEQRREEAARLAQ) the composition is skewed to basic and acidic residues. Residues 896 to 935 (EDEMAQKRASLLERQQRRAEEARRRKQWQEVEKEQRREEA) are a coiled coil. The span at 950–964 (VSAVPMATPAPAARA) shows a compositional bias: low complexity. Positions 970-998 (VGPRKGDFTRQEYERRAQLKLMDDLDKVL) are enriched in basic and acidic residues. A Phosphoserine modification is found at Ser1074. The region spanning 1109–1243 (GPRLYKEPSA…QGKKPTTPKK (135 aa)) is the CKK domain.

It belongs to the CAMSAP1 family. As to quaternary structure, interacts with PLEKHA7. Interacts with CAMSAP2. Interacts with KATNA1 and KATNB1; leading to regulate the length of CAMSAP3-decorated microtubule stretches. Interacts with AKAP9; regulating Golgi assembly in epithelial cells. Interacts with MACF1. Interacts with AKNA.

Its subcellular location is the cytoplasm. It is found in the cytoskeleton. The protein localises to the cell junction. It localises to the adherens junction. The protein resides in the cilium axoneme. Its subcellular location is the cilium basal body. Functionally, key microtubule-organizing protein that specifically binds the minus-end of non-centrosomal microtubules and regulates their dynamics and organization. Specifically recognizes growing microtubule minus-ends and autonomously decorates and stabilizes microtubule lattice formed by microtubule minus-end polymerization. Acts on free microtubule minus-ends that are not capped by microtubule-nucleating proteins or other factors and protects microtubule minus-ends from depolymerization. In addition, it also reduces the velocity of microtubule polymerization. Required for the biogenesis and the maintenance of zonula adherens by anchoring the minus-end of microtubules to zonula adherens and by recruiting the kinesin KIFC3 to those junctional sites. Required for orienting the apical-to-basal polarity of microtubules in epithelial cells: acts by tethering non-centrosomal microtubules to the apical cortex, leading to their longitudinal orientation. Plays a key role in early embryos, which lack centrosomes: accumulates at the microtubule bridges that connect pairs of cells and enables the formation of a non-centrosomal microtubule-organizing center that directs intracellular transport in the early embryo. Couples non-centrosomal microtubules with actin: interaction with MACF1 at the minus ends of non-centrosomal microtubules, tethers the microtubules to actin filaments, regulating focal adhesion size and cell migration. Plays a key role in the generation of non-centrosomal microtubules by accumulating in the pericentrosomal region and cooperating with KATNA1 to release non-centrosomal microtubules from the centrosome. Through the microtubule cytoskeleton, also regulates the organization of cellular organelles including the Golgi and the early endosomes. Through interaction with AKAP9, involved in translocation of Golgi vesicles in epithelial cells, where microtubules are mainly non-centrosomal. Plays an important role in motile cilia function by facilitatating proper orientation of basal bodies and formation of central microtubule pairs in motile cilia. The sequence is that of Calmodulin-regulated spectrin-associated protein 3 from Homo sapiens (Human).